A 298-amino-acid polypeptide reads, in one-letter code: Aspartate carbamoyltransferase catalytic subunit (298 aa).

The carbamoyl phosphate site is built by Arg54 and Thr55. Lys82 is a binding site for L-aspartate. 3 residues coordinate carbamoyl phosphate: Arg104, His132, and Gln135. 2 residues coordinate L-aspartate: Arg165 and Arg218. Gly260 and Pro261 together coordinate carbamoyl phosphate.

The protein belongs to the aspartate/ornithine carbamoyltransferase superfamily. ATCase family. Heterododecamer (2C3:3R2) of six catalytic PyrB chains organized as two trimers (C3), and six regulatory PyrI chains organized as three dimers (R2).

It catalyses the reaction carbamoyl phosphate + L-aspartate = N-carbamoyl-L-aspartate + phosphate + H(+). It functions in the pathway pyrimidine metabolism; UMP biosynthesis via de novo pathway; (S)-dihydroorotate from bicarbonate: step 2/3. Functionally, catalyzes the condensation of carbamoyl phosphate and aspartate to form carbamoyl aspartate and inorganic phosphate, the committed step in the de novo pyrimidine nucleotide biosynthesis pathway. The protein is Aspartate carbamoyltransferase catalytic subunit of Wolbachia sp. subsp. Brugia malayi (strain TRS).